The chain runs to 459 residues: Putrescine aminotransferase (459 aa).

Residues 150-151 and Gln-274 contribute to the pyridoxal 5'-phosphate site; that span reads GT. Lys-300 is subject to N6-(pyridoxal phosphate)lysine. Thr-332 lines the pyridoxal 5'-phosphate pocket.

The protein belongs to the class-III pyridoxal-phosphate-dependent aminotransferase family. Putrescine aminotransferase subfamily. Pyridoxal 5'-phosphate serves as cofactor.

It catalyses the reaction an alkane-alpha,omega-diamine + 2-oxoglutarate = an omega-aminoaldehyde + L-glutamate. The catalysed reaction is putrescine + 2-oxoglutarate = 1-pyrroline + L-glutamate + H2O. The enzyme catalyses cadaverine + 2-oxoglutarate = 5-aminopentanal + L-glutamate. The protein operates within amine and polyamine degradation; putrescine degradation; 4-aminobutanal from putrescine (transaminase route): step 1/1. In terms of biological role, catalyzes the aminotransferase reaction from putrescine to 2-oxoglutarate, leading to glutamate and 4-aminobutanal, which spontaneously cyclizes to form 1-pyrroline. This is the first step in one of two pathways for putrescine degradation, where putrescine is converted into 4-aminobutanoate (gamma-aminobutyrate or GABA) via 4-aminobutanal. Also functions as a cadaverine transaminase in a a L-lysine degradation pathway to succinate that proceeds via cadaverine, glutarate and L-2-hydroxyglutarate. This is Putrescine aminotransferase from Klebsiella pneumoniae subsp. pneumoniae (strain ATCC 700721 / MGH 78578).